The sequence spans 874 residues: Coatomer subunit gamma-1 (874 aa).

Residues 1–11 (MLKKFDKKDEE) are compositionally biased toward basic and acidic residues. The tract at residues 1 to 21 (MLKKFDKKDEESGGGSNPLQH) is disordered. 4 HEAT repeats span residues 64–101 (TEAT…IAED), 283–320 (KELA…KHPS), 322–355 (VTAC…GSES), and 356–392 (SIDR…KYPR). The residue at position 594 (threonine 594) is a Phosphothreonine. The interaction with ZNF289/ARFGAP2 stretch occupies residues 609–874 (RQEIFQEQLA…PVDIILASVG (266 aa)).

The protein belongs to the COPG family. As to quaternary structure, oligomeric complex that consists of at least the alpha, beta, beta', gamma, delta, epsilon and zeta subunits. Interacts with ZNF289/ARFGAP2 through its C-terminal appendage domain. Interacts with EGFR upon EGF treatment; interaction is essential for regulation of EGF-dependent nuclear transport of EGFR by retrograde trafficking from the Golgi to the ER. The coatomer interacts with KDEL receptors; the interaction is important for retrograde trafficking of KDEL-bearing proteins from the Golgi to the endoplasmic reticulum. Interacts with COPB1. Interacts with TMED10 (via C-terminus). Interacts with TMED2, TMED3, TMED7 and TMED9.

It is found in the cytoplasm. The protein resides in the cytosol. The protein localises to the golgi apparatus membrane. It localises to the cytoplasmic vesicle. Its subcellular location is the COPI-coated vesicle membrane. The coatomer is a cytosolic protein complex that binds to dilysine motifs and reversibly associates with Golgi non-clathrin-coated vesicles, which further mediate biosynthetic protein transport from the ER, via the Golgi up to the trans Golgi network. Coatomer complex is required for budding from Golgi membranes, and is essential for the retrograde Golgi-to-ER transport of dilysine-tagged proteins. In mammals, the coatomer can only be recruited by membranes associated to ADP-ribosylation factors (ARFs), which are small GTP-binding proteins; the complex also influences the Golgi structural integrity, as well as the processing, activity, and endocytic recycling of LDL receptors. Required for limiting lipid storage in lipid droplets. Involved in lipid homeostasis by regulating the presence of perilipin family members PLIN2 and PLIN3 at the lipid droplet surface and promoting the association of adipocyte triglyceride lipase (PNPLA2) with the lipid droplet surface to mediate lipolysis. This Rattus norvegicus (Rat) protein is Coatomer subunit gamma-1 (Copg1).